The following is a 625-amino-acid chain: Probable thymidylate synthase (625 aa).

The interval 224-323 (AVKNIDGQDD…PEPPVPFTSS (100 aa)) is disordered. The segment covering 243–257 (EEYDDDDDDDVDDNE) has biased composition (acidic residues). Polar residues-rich tracts occupy residues 258–269 (QSNSMIETSANA) and 293–312 (SQAPLGSESVDTQASENVTT). Residues arginine 350 and 477-478 (RR) each bind dUMP. Catalysis depends on cysteine 497, which acts as the Nucleophile. Residues 524–527 (RSAD), asparagine 535, and 565–567 (HIY) each bind dUMP. Residue aspartate 527 participates in (6R)-5,10-methylene-5,6,7,8-tetrahydrofolate binding.

This sequence in the N-terminal section; belongs to the HFCD (homo-oligomeric flavin containing Cys decarboxylase) superfamily. It in the C-terminal section; belongs to the thymidylate synthase family.

The protein resides in the cytoplasm. It carries out the reaction dUMP + (6R)-5,10-methylene-5,6,7,8-tetrahydrofolate = 7,8-dihydrofolate + dTMP. It participates in pyrimidine metabolism; dTTP biosynthesis. Required for both nuclear and mitochondrial DNA synthesis. The chain is Probable thymidylate synthase from Schizosaccharomyces pombe (strain 972 / ATCC 24843) (Fission yeast).